The sequence spans 329 residues: Vomeronasal type-1 receptor 43 (329 aa).

The Extracellular segment spans residues 1-32 (MSKILFFSPCSLFSHTMNKNSRLHTNSNIGNT). Residues 33-53 (FFSEIGIGITGNSFLLLYHIL) traverse the membrane as a helical segment. Residues 54–65 (KFIRGHRPRLTD) are Cytoplasmic-facing. The chain crosses the membrane as a helical span at residues 66 to 86 (LPIGLLSLIHLLMLLVAAFIA). Topologically, residues 87 to 109 (TDIFISRRGWDDIICKFLVYLYR) are extracellular. Cys101 and Cys188 are disulfide-bonded. A helical membrane pass occupies residues 110–130 (VLRGLSLCTTSMLSVLQAIIL). The Cytoplasmic portion of the chain corresponds to 131 to 147 (SPRSSCLSKFKHISLHH). The chain crosses the membrane as a helical span at residues 148 to 168 (ILCAILFLSVLYMLISSQLLV). Topologically, residues 169–209 (SIIATPNLTTNDLTYVTQSCSILPLSYLVESINSTLLAIRE) are extracellular. Asn175 and Asn201 each carry an N-linked (GlcNAc...) asparagine glycan. The helical transmembrane segment at 210 to 230 (YFLISLMFLSTWYIVALLCMH) threads the bilayer. Over 231-255 (RKQTQHLQETRLSLKKSPEQSATQT) the chain is Cytoplasmic. Residues 256–276 (ILMLMTFFVLMTIYDNIVSCL) form a helical membrane-spanning segment. Residues 277-285 (RTMLLNDPT) lie on the Extracellular side of the membrane. The helical transmembrane segment at 286–306 (SYSIELFMIHIYATVSPFVFM) threads the bilayer. Over 307–329 (SNEKHIVNFLRSMGKRMINLNLH) the chain is Cytoplasmic.

It belongs to the G-protein coupled receptor 1 family.

It localises to the cell membrane. Putative pheromone receptor implicated in the regulation of social and reproductive behavior. In Mus musculus (Mouse), this protein is Vomeronasal type-1 receptor 43 (Vmn1r43).